The sequence spans 199 residues: Inactive glutathione S-transferase D3 (199 aa).

Residues 1–64 (MVGKALGLEF…YLVEKYGKDD (64 aa)) form the GST N-terminal domain. Glutathione contacts are provided by residues 34–36 (HSI) and 48–50 (ESR). Residues 70–199 (DIQKQAVINQ…RIEEKQNAAK (130 aa)) form the GST C-terminal domain.

This sequence belongs to the GST superfamily. Delta family. In terms of assembly, homodimer.

Functionally, has no glutathione S-transferase activity. The polypeptide is Inactive glutathione S-transferase D3 (Drosophila melanogaster (Fruit fly)).